A 432-amino-acid polypeptide reads, in one-letter code: Adenosylhomocysteinase (432 aa).

The substrate site is built by Thr-56, Asp-131, and Glu-156. 157-159 (TTT) lines the NAD(+) pocket. Substrate is bound by residues Lys-186 and Asp-190. NAD(+) contacts are provided by residues 222–227 (GDVGKG), Glu-243, Asn-248, 299–301 (IGH), Asn-346, His-353, Lys-426, 426–430 (KPDHY), and Tyr-430.

Belongs to the adenosylhomocysteinase family. In terms of assembly, interacts with AhcyL1; the interaction may negatively regulate Ahcy catalytic activity. Requires NAD(+) as cofactor.

It catalyses the reaction S-adenosyl-L-homocysteine + H2O = L-homocysteine + adenosine. The protein operates within amino-acid biosynthesis; L-homocysteine biosynthesis; L-homocysteine from S-adenosyl-L-homocysteine: step 1/1. Functionally, adenosylhomocysteine is a competitive inhibitor of S-adenosyl-L-methionine-dependent methyl transferase reactions; therefore adenosylhomocysteinase may play a key role in the control of methylations via regulation of the intracellular concentration of adenosylhomocysteine. This chain is Adenosylhomocysteinase, found in Drosophila melanogaster (Fruit fly).